Here is a 66-residue protein sequence, read N- to C-terminus: Large ribosomal subunit protein uL29 (66 aa).

It belongs to the universal ribosomal protein uL29 family.

The sequence is that of Large ribosomal subunit protein uL29 from Rhizobium johnstonii (strain DSM 114642 / LMG 32736 / 3841) (Rhizobium leguminosarum bv. viciae).